The primary structure comprises 1220 residues: Osmosensing histidine protein kinase SLN1 (1220 aa).

Over 1-22 (MRFGLPSKLELTPPFRIGIRTQ) the chain is Cytoplasmic. The chain crosses the membrane as a helical span at residues 23–46 (LTALVSIVALGSLIILAVTTGVYF). Over 47 to 333 (TSNYKNLRSD…FLSPATKLAK (287 aa)) the chain is Extracellular. 6 N-linked (GlcNAc...) asparagine glycosylation sites follow: asparagine 100, asparagine 138, asparagine 142, asparagine 181, asparagine 224, and asparagine 272. A helical membrane pass occupies residues 334-354 (IITGTVIAIGVFVILLTLPLA). Over 355 to 1220 (HWAVQPIVRL…AAYQGKKNNK (866 aa)) the chain is Cytoplasmic. 2 disordered regions span residues 414 to 433 (GSTT…GAAF) and 444 to 500 (NLGN…HILT). Residues 451–468 (SPPEEENKIPNNHTDAKI) are compositionally biased toward basic and acidic residues. The residue at position 502 (serine 502) is a Phosphoserine. One can recognise a Histidine kinase domain in the interval 573 to 928 (NISHELRTPL…KFTFTLPLNQ (356 aa)). Residue histidine 576 is modified to Phosphohistidine; by autocatalysis. Phosphoserine is present on residues serine 758 and serine 833. Disordered regions lie at residues 960 to 1016 (AKSI…DNGG) and 1040 to 1081 (NSLS…VKDD). Residues 965–984 (SRQSTSSVATPATNRSSLTN) show a composition bias toward polar residues. Residues 988–1000 (PEVRSKGKHETKD) show a composition bias toward basic and acidic residues. Serine 1041 and serine 1044 each carry phosphoserine. Over residues 1063-1075 (LQSTGTATSSRNI) the composition is skewed to polar residues. Residues 1089–1210 (KILVVEDNHV…KLKTILTEFC (122 aa)) enclose the Response regulatory domain. Glutamate 1094, aspartate 1095, aspartate 1144, and lysine 1195 together coordinate Mg(2+). Aspartate 1144 carries the 4-aspartylphosphate modification.

As to quaternary structure, interacts with DJP1, MOG1 and YPD1. The phosphorelay mechanism involves the sequential transfer of a phosphate group from His-576 (H1) in the histidine kinase domain (transmitter domain) to Asp-1144 (D1) of the response regulatory domain (receiver domain). This transfer probably occurs between two SLN1 molecules, rather than intramolecularly. The phosphate group is further transferred to 'His-64' (H2) of YPD1 and finally to 'Asp-554' (D2) of SSK1 or 'Asp-427' (D2) of SKN7.

It localises to the cell membrane. It carries out the reaction ATP + protein L-histidine = ADP + protein N-phospho-L-histidine.. Histidine kinase that acts as an osmosensor at the plasma membrane. Part of the bifurcated SLN1-YPD1-SKN7/SSK1 two-component regulatory system, which controls activity of the HOG1 pathway and gene expression in response to changes in the osmolarity of the extracellular environment. Under normal osmotic conditions, the histidine kinase autophosphorylates His-576. This phosphate is subsequently transferred to Asp-1144, from where it is relayed to 'His-64' of the phosphorelay intermediate protein YPD1. Under high osmolarity conditions, the histidine kinase is no longer active. The polypeptide is Osmosensing histidine protein kinase SLN1 (SLN1) (Saccharomyces cerevisiae (strain ATCC 204508 / S288c) (Baker's yeast)).